Reading from the N-terminus, the 689-residue chain is Transcription termination factor Rho (689 aa).

Residues 1–20 (MPRTPKNQNLEQNTQTQSLT) show a composition bias toward polar residues. Disordered stretches follow at residues 1 to 90 (MPRT…KQPV) and 151 to 213 (AQAQ…NRNN). The span at 52 to 65 (PKRRGRKPNPKTKA) shows a compositional bias: basic residues. Composition is skewed to low complexity over residues 170–183 (NAQQQGEAQAQNGE) and 191–213 (NNQNGKFNKFNKNNKFNKNNRNN). Positions 287-362 (IIYTEGVLEV…RRIDRVNFEE (76 aa)) constitute a Rho RNA-BD domain. Residues 405 to 410 (GKGQRS), 417 to 422 (RTGKTV), and Arg448 each bind ATP.

It belongs to the Rho family. Homohexamer. The homohexamer assembles into an open ring structure.

In terms of biological role, facilitates transcription termination by a mechanism that involves Rho binding to the nascent RNA, activation of Rho's RNA-dependent ATPase activity, and release of the mRNA from the DNA template. In Fibrobacter succinogenes (strain ATCC 19169 / S85), this protein is Transcription termination factor Rho.